The following is a 282-amino-acid chain: Putative SLC9B1-like protein SLC9B1P1 (282 aa).

The next 7 membrane-spanning stretches (helical) occupy residues 27–47, 51–71, 87–107, 135–155, 174–194, 198–218, and 239–259; these read LLAITGFNTCLSIVFYSGGMI, IASLRNVCISLLAGIVLGFFV, GFLVLITFVSAVLGSQPIGLH, IITNVWDIFQPLLFGLVGAEV, LALCVRILNIYLLMCFAGFSF, IFIALAWMPKATVQAVLGPLA, and VAFLAIMITAPNGALLMGILG.

This sequence belongs to the monovalent cation:proton antiporter 1 (CPA1) transporter (TC 2.A.36) family.

Its subcellular location is the membrane. The chain is Putative SLC9B1-like protein SLC9B1P1 (SLC9B1P1) from Homo sapiens (Human).